Consider the following 1044-residue polypeptide: Pre-mRNA-splicing factor ATP-dependent RNA helicase DEAH1 (1044 aa).

The interval 106–206 (EVVVEKKSSV…TLSKKEKEEA (101 aa)) is disordered. A compositionally biased stretch (basic and acidic residues) spans 108–121 (VVEKKSSVSESRKS). A compositionally biased stretch (basic residues) spans 122–132 (DKGKKRFRKKS). Phosphoserine is present on residues Ser135 and Ser138. The segment covering 157–166 (EEDDGSESEE) has biased composition (acidic residues). Over residues 167–206 (ERVRDQKEREELEQHLKDRDTARTRKLTEQTLSKKEKEEA) the composition is skewed to basic and acidic residues. One can recognise a Helicase ATP-binding domain in the interval 414 to 577 (LKAVEEHQVL…FDTAPIFSFP (164 aa)). An ATP-binding site is contributed by 427–434 (GDTGSGKT). Residues 524-527 (DEAH) carry the DEAH box motif. Residues 600–775 (IVTILTIHVR…SVVLALKSLG (176 aa)) form the Helicase C-terminal domain.

This sequence belongs to the DEAD box helicase family. DEAH subfamily. PRP2 sub-subfamily. Widely expressed.

The catalysed reaction is ATP + H2O = ADP + phosphate + H(+). Functionally, involved in pre-mRNA splicing. The polypeptide is Pre-mRNA-splicing factor ATP-dependent RNA helicase DEAH1 (Arabidopsis thaliana (Mouse-ear cress)).